The following is a 516-amino-acid chain: MERYKLRQVIGEGASSTVYSGVSARGEEVAVKVVPRKGRSTGMVYREIEMLSTIKHENIVGIVGRFESKKHVYMVEELCDFNLVSFLNEYEVDEDVALKILRMILCGLRHIHSLGIIHRDLKLGNILLKGNTVKICDFGLSCYVEENNSEFCGTMDYLAPEVVDGKKYSFGVDMWSAGVVFYVLLTKKKFCESLDSLECSEELRDLLEKLLERDESKRADASEALMHRSFSRFIPRCEDFRGLPGFERGTKYGVLRKAGDSVELGSIRIDARRGKRHGGGRKHGDLGCLCGEEFTYSVYVDSEEIEPAFITNGQLKTLGLLTAHVKAMREKTPKIIIDDDGNKFYYMFSGGFVYVGKELTLRARGGKYEMSRRSGEKTYLEAVPDFLYEAIGGLEARCKAIDKEVCWFSRESPVLIDCSSHQQFSMSCISQVSEMSIRNRVEYDYIESTGWCIRDGLNFLFLMNDGEMFEVLCPDLAVRYRGRLLFIDDRLPMKLKRSLKGISPFLRSLCDGCYMS.

Positions 4-230 (YKLRQVIGEG…ASEALMHRSF (227 aa)) constitute a Protein kinase domain. ATP contacts are provided by residues 10–18 (IGEGASSTV) and Lys32. Residue Asp120 is the Proton acceptor of the active site.

Belongs to the protein kinase superfamily. CAMK Ser/Thr protein kinase family.

The enzyme catalyses L-seryl-[protein] + ATP = O-phospho-L-seryl-[protein] + ADP + H(+). It carries out the reaction L-threonyl-[protein] + ATP = O-phospho-L-threonyl-[protein] + ADP + H(+). The polypeptide is Probable serine/threonine-protein kinase ECU02_0550 (Encephalitozoon cuniculi (strain GB-M1) (Microsporidian parasite)).